We begin with the raw amino-acid sequence, 186 residues long: ADP-ribosylation factor-like protein 8A (186 aa).

The segment at residues 1-19 (MLALFNKLLDWFKALFWKE) is an intramembrane region (note=Mediates targeting to membranes). Residues 29-35 (QYSGKTT), 71-75 (DIGGQ), and 130-133 (NKRD) each bind GTP.

It belongs to the small GTPase superfamily. Arf family.

The protein localises to the late endosome membrane. Its subcellular location is the lysosome membrane. May play a role in lysosomes motility. Alternatively, may play a role in chromosome segregation. This is ADP-ribosylation factor-like protein 8A (arl8a) from Xenopus tropicalis (Western clawed frog).